The primary structure comprises 487 residues: Ribosome biogenesis protein YTM1 (487 aa).

Positions 13–95 (VKVTFTTNEA…ETNLTLQYVR (83 aa)) are ubiquitin-like (UBL) domain. WD repeat units follow at residues 122–161 (SPAGRWSGENFSRGQERILSASYDGLLRIWNASGEVLVTA), 168–206 (GHSASIKAAKFISSTQIASTGMDRSVRVWKYTDPGASGQ), 217–256 (GHRASVDSLEVHGPSKRILTASADGSVALWSASKSSSPEA), 379–419 (GHTN…PASG), and 451–487 (GEGAKVFGVVWDRELGILSGGEDKKVQVNRGRDVVRE). The tract at residues 253–277 (SPEADASLLPNAHTSKRRKVASSVT) is disordered.

Belongs to the WD repeat WDR12/YTM1 family. As to quaternary structure, component of the NOP7 complex, composed of ERB1, NOP7 and YTM1. The complex is held together by ERB1, which interacts with NOP7 via its N-terminal domain and with YTM1 via a high-affinity interaction between the seven-bladed beta-propeller domains of the 2 proteins. The NOP7 complex associates with the 66S pre-ribosome. Interacts (via UBL domain) with MDN1 (via VWFA/MIDAS domain).

It localises to the nucleus. The protein localises to the nucleolus. It is found in the nucleoplasm. In terms of biological role, component of the NOP7 complex, which is required for maturation of the 25S and 5.8S ribosomal RNAs and formation of the 60S ribosome. This is Ribosome biogenesis protein YTM1 from Podospora anserina (strain S / ATCC MYA-4624 / DSM 980 / FGSC 10383) (Pleurage anserina).